The chain runs to 689 residues: MSDKTFLVEIGTEELPPKALRSLAESFAANVTAELDNAGLTHGKIEWFAAPRRLALKVANLAASQADREVEKRGPAISQAFDAEGKPSKAAEGWARGCGITVDQAERLTTDKGEWLLYRAHVKGESAEALLPNMIATSLAKLPIPKLMRWGASDVHFVRPVHTVTLLLGDTVIPATILGIQSDRVIRGHRFMGEPEFTIDNADQYPQILLERGKVIADYELRKAKIKADAEEAARKIGGNADLSESLLEEVTSLVEWPVVLTAKFEEKFLAVPAEALVYTMKGDQKYFPVYANDGKLLPNFIFVANIESKDPIQIISGNEKVVRPRLADAEFFFNTDRKKRLEDHLPRLQTVLFQQQLGTLRDKTDRIAELSGWIAREIGADVNHATRAGLLSKCDLMTNMVFEFTDTQGVMGMHYARHDGEAEDVAVALNEQYQPRFAGDDLPSNPVACAVAIADKMDTLAGIFGIGQHPKGDKDPFALRRAALGVLRIIVEKNLSLDLQTLTEEAVRLYGDKLTNAKVVDEVIDFMLGRFRAWYQDEGYTVDTIQAVLARRPTRPADFDARMKAVSHFRTLEAASALAAANKRVSNILAKSDETLNERVNAATLKEPEEIALALQVVVLRDKLEPFFAEGRYQEALVELAELREVIDAFFEKVMVNVEDKDLRINRLSMLEKLRELFLRVADISLLQ.

This sequence belongs to the class-II aminoacyl-tRNA synthetase family. In terms of assembly, tetramer of two alpha and two beta subunits.

Its subcellular location is the cytoplasm. The catalysed reaction is tRNA(Gly) + glycine + ATP = glycyl-tRNA(Gly) + AMP + diphosphate. This is Glycine--tRNA ligase beta subunit from Enterobacter sp. (strain 638).